The chain runs to 380 residues: Homoserine O-succinyltransferase (380 aa).

Residues 49-357 (NAILICHALS…ESTHGHDAFL (309 aa)) form the AB hydrolase-1 domain. Serine 155 (nucleophile) is an active-site residue. Substrate is bound at residue arginine 225. Catalysis depends on residues aspartate 320 and histidine 353. Residue aspartate 354 participates in substrate binding.

It belongs to the AB hydrolase superfamily. MetX family. As to quaternary structure, homodimer.

The protein localises to the cytoplasm. It carries out the reaction L-homoserine + succinyl-CoA = O-succinyl-L-homoserine + CoA. Its pathway is amino-acid biosynthesis; L-methionine biosynthesis via de novo pathway; O-succinyl-L-homoserine from L-homoserine: step 1/1. Functionally, transfers a succinyl group from succinyl-CoA to L-homoserine, forming succinyl-L-homoserine. This chain is Homoserine O-succinyltransferase, found in Laribacter hongkongensis (strain HLHK9).